A 403-amino-acid chain; its full sequence is Metacaspase-1 (403 aa).

The interval 1-95 is disordered; the sequence is MFPGSGHNTY…PSGSQSFGQN (95 aa). The span at 13–22 shows a compositional bias: pro residues; it reads YPPPQGPPPN. Low complexity-rich tracts occupy residues 23 to 34 and 49 to 62; these read NNGYNSGPNNSY and QYDQ…QSQP. Catalysis depends on residues His-193 and Cys-249.

It belongs to the peptidase C14B family.

Involved in cell death (apoptosis). This Scheffersomyces stipitis (strain ATCC 58785 / CBS 6054 / NBRC 10063 / NRRL Y-11545) (Yeast) protein is Metacaspase-1 (MCA1).